Consider the following 487-residue polypeptide: N-succinylglutamate 5-semialdehyde dehydrogenase (487 aa).

221–226 serves as a coordination point for NAD(+); the sequence is GSSDTG. Residues E244 and C278 contribute to the active site.

This sequence belongs to the aldehyde dehydrogenase family. AstD subfamily.

It carries out the reaction N-succinyl-L-glutamate 5-semialdehyde + NAD(+) + H2O = N-succinyl-L-glutamate + NADH + 2 H(+). It participates in amino-acid degradation; L-arginine degradation via AST pathway; L-glutamate and succinate from L-arginine: step 4/5. Catalyzes the NAD-dependent reduction of succinylglutamate semialdehyde into succinylglutamate. The protein is N-succinylglutamate 5-semialdehyde dehydrogenase of Burkholderia thailandensis (strain ATCC 700388 / DSM 13276 / CCUG 48851 / CIP 106301 / E264).